We begin with the raw amino-acid sequence, 223 residues long: MENKKKKAVVVFSGGQDSTTCLFWALKTFDEVATVTFDYGQRHAEEIECAKEIAEQLGVSFRVLDMTLLNQLTESALTREEIAVKDGENGELPSTFVPGRNQLFLSFAAVYAKQIGARHLVTGVCETDYSGYPDCRDVFIKSLNVTLNLAMDDQFVIHTPLMWLDKAETWKLADELGALDFVREKTLTCYHGIRGDGCGECPACMLRRRGLELYLAEKEGDRA.

12-22 (FSGGQDSTTCL) serves as a coordination point for ATP. The Zn(2+) site is built by cysteine 189, cysteine 198, cysteine 201, and cysteine 204.

This sequence belongs to the QueC family. Homodimer. Requires Zn(2+) as cofactor.

It catalyses the reaction 7-carboxy-7-deazaguanine + NH4(+) + ATP = 7-cyano-7-deazaguanine + ADP + phosphate + H2O + H(+). It participates in purine metabolism; 7-cyano-7-deazaguanine biosynthesis. Catalyzes the ATP-dependent conversion of 7-carboxy-7-deazaguanine (CDG) to 7-cyano-7-deazaguanine (preQ(0)). This Halalkalibacterium halodurans (strain ATCC BAA-125 / DSM 18197 / FERM 7344 / JCM 9153 / C-125) (Bacillus halodurans) protein is 7-cyano-7-deazaguanine synthase.